The chain runs to 1868 residues: Protein TIC 214 (1868 aa).

The next 6 helical transmembrane spans lie at 11-31 (LLLLWMNIVNSVVLVGLYYGF), 64-84 (FIMGQFIIFISTYYPPLHLAL), 87-107 (PHTLTVLVLPYLLLHFLFFWN), 126-146 (LSIQYVFLNNLIFQLFNHFIL), 166-186 (ILFVISSFFGWLIGHILLMKS), and 221-241 (IFSILLFITCVCYLGRMPSPI). A compositionally biased stretch (basic and acidic residues) spans 248–276 (ESSKGEEKKKTEKERDVEMETISKTKKIE). Disordered stretches follow at residues 248–277 (ESSKGEEKKKTEKERDVEMETISKTKKIEQ), 617–643 (FDFEEEEEEEEEEDDEEEPTDDHGIRS), 658–700 (DEDT…QAEE), 782–806 (TSDYAGEGAKEEEHEEEKREYKRKE), and 1537–1607 (YIDP…RKKK). Residues 617–636 (FDFEEEEEEEEEEDDEEEPT) show a composition bias toward acidic residues. The segment covering 674 to 683 (AKNSDQAKNS) has biased composition (polar residues). 3 stretches are compositionally biased toward basic and acidic residues: residues 684–700 (DQAKKSDQAKNSDQAEE), 789–806 (GAKEEEHEEEKREYKRKE), and 1537–1576 (YIDPKVKSNQKERSNPKAESNQKEYLELENRNRDEKERQH).

Belongs to the TIC214 family. As to quaternary structure, part of the Tic complex.

It is found in the plastid. It localises to the chloroplast inner membrane. Involved in protein precursor import into chloroplasts. May be part of an intermediate translocation complex acting as a protein-conducting channel at the inner envelope. The polypeptide is Protein TIC 214 (Nuphar advena (Common spatterdock)).